Here is a 505-residue protein sequence, read N- to C-terminus: Annexin A11 (505 aa).

Composition is skewed to pro residues over residues 1 to 17 (MSYP…PPAA) and 99 to 160 (PVPP…PVPL). Disordered stretches follow at residues 1–38 (MSYP…PPIG) and 84–199 (PVPP…DAPG). Low complexity predominate over residues 161 to 177 (PGQQQPVPSYPGYPGSG). Annexin repeat units follow at residues 200-271 (FDPL…ALMK), 272-343 (TPVL…SLSQ), 355-427 (SLAQ…AVVK), and 431-502 (NTPA…KICG). An N6-acetyllysine mark is found at lysine 248 and lysine 255. The residue at position 479 (lysine 479) is an N6-acetyllysine.

It belongs to the annexin family. In terms of assembly, interacts with S100A6. Interacts with PDCD6 in a calcium-dependent manner. Interacts with KIF23 during cytokinesis.

Its subcellular location is the cytoplasm. It is found in the melanosome. The protein localises to the nucleus envelope. It localises to the nucleus. The protein resides in the nucleoplasm. Its subcellular location is the cytoskeleton. It is found in the spindle. Binds specifically to calcyclin in a calcium-dependent manner. Required for midbody formation and completion of the terminal phase of cytokinesis. The protein is Annexin A11 (ANXA11) of Homo sapiens (Human).